Here is a 208-residue protein sequence, read N- to C-terminus: Large ribosomal subunit protein bL25 (208 aa).

It belongs to the bacterial ribosomal protein bL25 family. CTC subfamily. In terms of assembly, part of the 50S ribosomal subunit; part of the 5S rRNA/L5/L18/L25 subcomplex. Contacts the 5S rRNA. Binds to the 5S rRNA independently of L5 and L18.

Its function is as follows. This is one of the proteins that binds to the 5S RNA in the ribosome where it forms part of the central protuberance. The chain is Large ribosomal subunit protein bL25 from Burkholderia thailandensis (strain ATCC 700388 / DSM 13276 / CCUG 48851 / CIP 106301 / E264).